The chain runs to 1987 residues: Transcriptional activator DEMETER (1987 aa).

Disordered stretches follow at residues 246–378 (TGHE…NKSP), 392–415 (DLENPGDARQGDSESEIVQNSSGA), and 793–901 (MPPE…GPSG). The segment covering 258–277 (SMQSIMDSSAVNATEATEQN) has biased composition (polar residues). Over residues 341–364 (ATQEKVKSKETGSAKKKNLKESAT) the composition is skewed to basic and acidic residues. The span at 813–829 (NTASISKGASKGNSSPV) shows a compositional bias: polar residues. Residues 844–855 (PAKKGRAGRKKS) show a composition bias toward basic residues. Residues 955–1054 (KVDIDDETTR…AFMSLAARFP (100 aa)) are DEMETER. Disordered regions lie at residues 1324–1351 (LPGMGLSGSSSAVQEHQDDTQHNQQDEM) and 1439–1471 (TLADGKKPTSQWDSLRKDVEGNEGRQERNKNNM). Basic and acidic residues-rich tracts occupy residues 1338-1351 (EHQDDTQHNQQDEM) and 1452-1469 (SLRKDVEGNEGRQERNKN). [4Fe-4S] cluster is bound by residues Cys-1629, Cys-1636, Cys-1639, and Cys-1645.

It belongs to the DNA glycosylase family. DEMETER subfamily. [4Fe-4S] cluster serves as cofactor. Mainly expressed in immature flower buds, then decreases as the flower matures. Expressed in the ovule carpels, but not expressed in pollen stamens. Expressed in developing and mature ovules (stages 12-14), then strongly decreases after fertilization.

The protein resides in the nucleus. In terms of biological role, transcriptional activator involved in gene imprinting. Catalyzes the release of 5-methylcytosine (5-meC) from DNA by a glycosylase/lyase mechanism. Allows the expression of the maternal copy of the imprinted MEA gene before fertilization, possibly by antagonizing or suppressing DNA methylation on target promoter. Probably acts by nicking the MEA promoter. Required for stable reproducible patterns of floral and vegetative development. This chain is Transcriptional activator DEMETER (DME), found in Arabidopsis thaliana (Mouse-ear cress).